The following is a 405-amino-acid chain: Threonine synthase (405 aa).

Residue Lys104 is modified to N6-(pyridoxal phosphate)lysine. Residues Asn130, 231–235, and Thr369 contribute to the pyridoxal 5'-phosphate site; that span reads GNAGN.

This sequence belongs to the threonine synthase family. In terms of assembly, homotrimer. It depends on pyridoxal 5'-phosphate as a cofactor.

It catalyses the reaction O-phospho-L-homoserine + H2O = L-threonine + phosphate. It functions in the pathway amino-acid biosynthesis; L-threonine biosynthesis; L-threonine from L-aspartate: step 5/5. Its function is as follows. Catalyzes the gamma-elimination of phosphate from L-phosphohomoserine and the beta-addition of water to produce L-threonine. Does not catalyze the conversion of O-acetyl-L-homoserine into threonine. The sequence is that of Threonine synthase (thrC) from Methanosarcina acetivorans (strain ATCC 35395 / DSM 2834 / JCM 12185 / C2A).